We begin with the raw amino-acid sequence, 224 residues long: Uridylate kinase (224 aa).

6-10 (KVTGK) serves as a coordination point for ATP. Gly-41 provides a ligand contact to UMP. Positions 42 and 46 each coordinate ATP. Residues Asp-63 and 111 to 117 (FQPGQST) each bind UMP. The ATP site is built by Thr-137, Phe-143, and Asp-146.

The protein belongs to the UMP kinase family. Homohexamer.

The protein resides in the cytoplasm. It carries out the reaction UMP + ATP = UDP + ADP. The protein operates within pyrimidine metabolism; CTP biosynthesis via de novo pathway; UDP from UMP (UMPK route): step 1/1. Inhibited by UTP. Catalyzes the reversible phosphorylation of UMP to UDP. In Metallosphaera sedula (strain ATCC 51363 / DSM 5348 / JCM 9185 / NBRC 15509 / TH2), this protein is Uridylate kinase.